The sequence spans 160 residues: Ribosomal RNA large subunit methyltransferase H (160 aa).

Positions 76 and 108 each coordinate S-adenosyl-L-methionine.

It belongs to the RNA methyltransferase RlmH family. In terms of assembly, homodimer.

It localises to the cytoplasm. The catalysed reaction is pseudouridine(1915) in 23S rRNA + S-adenosyl-L-methionine = N(3)-methylpseudouridine(1915) in 23S rRNA + S-adenosyl-L-homocysteine + H(+). Functionally, specifically methylates the pseudouridine at position 1915 (m3Psi1915) in 23S rRNA. This is Ribosomal RNA large subunit methyltransferase H from Afipia carboxidovorans (strain ATCC 49405 / DSM 1227 / KCTC 32145 / OM5) (Oligotropha carboxidovorans).